The primary structure comprises 293 residues: Deubiquitinase OTUD6B (293 aa).

Met1 is modified (N-acetylmethionine). In terms of domain architecture, OTU spans 147-284 (LEIKQIPSDG…GEHYNSVTRL (138 aa)). Residues 152–158 (IPSDGHC) are cys-loop. Residue Asp155 is part of the active site. Cys158 (nucleophile) is an active-site residue. Positions 219–229 (IVNTAAWGGQL) are variable-loop. The segment at 267–277 (YMRHAYGLGEH) is his-loop. The active site involves His277.

As to quaternary structure, interacts with the eukaryotic translation initiation factor 4F complex.

The catalysed reaction is Thiol-dependent hydrolysis of ester, thioester, amide, peptide and isopeptide bonds formed by the C-terminal Gly of ubiquitin (a 76-residue protein attached to proteins as an intracellular targeting signal).. In terms of biological role, deubiquitinating enzyme that may play a role in the ubiquitin-dependent regulation of protein synthesis, downstream of mTORC1. May associate with the protein synthesis initiation complex and modify its ubiquitination to repress translation. May also repress DNA synthesis and modify different cellular targets thereby regulating cell growth and proliferation. May also play a role in proteasome assembly and function. Its function is as follows. Stimulates protein synthesis. Influences the expression of CCND1/cyclin D1 by promoting its translation and regulates MYC/c-Myc protein stability. The polypeptide is Deubiquitinase OTUD6B (Homo sapiens (Human)).